The sequence spans 212 residues: MADTITDAVSRAIDEAPTRNFRETVDLAVNLRDLDLNDPSNRVDESVVLPAGTGQETQIVVFASGETALRAEDVADQVLSGDELEELGDDDDAAKDLADEIDFFVAEAGMMQDIGRFLGTILGPRGKMPTPLQPDDDVVETVNRMQNTVQIRSRERRTFHTRVGAQDMDSEEIADNVDVIIRRLEATLEKGPLNIDSMYVKTTMGPAVEVPA.

This sequence belongs to the universal ribosomal protein uL1 family. Part of the 50S ribosomal subunit.

Its function is as follows. Binds directly to 23S rRNA. Probably involved in E site tRNA release. Protein L1 is also a translational repressor protein, it controls the translation of its operon by binding to its mRNA. The chain is Large ribosomal subunit protein uL1 from Haloquadratum walsbyi (strain DSM 16790 / HBSQ001).